A 600-amino-acid polypeptide reads, in one-letter code: Cytidine monophosphate-N-acetylneuraminic acid hydroxylase (600 aa).

Residues 9 to 107 (LSPVEVASLK…VEMDENNRLL (99 aa)) enclose the Rieske domain. Residues C49, H51, C70, and H73 each contribute to the [2Fe-2S] cluster site.

The protein belongs to the CMP-Neu5Ac hydroxylase family. It depends on [2Fe-2S] cluster as a cofactor.

The protein localises to the cytoplasm. The catalysed reaction is CMP-N-acetyl-beta-neuraminate + 2 Fe(II)-[cytochrome b5] + O2 + 2 H(+) = CMP-N-glycoloyl-beta-neuraminate + 2 Fe(III)-[cytochrome b5] + H2O. The protein operates within amino-sugar metabolism; N-acetylneuraminate metabolism. In terms of biological role, sialic acids are components of carbohydrate chains of glycoconjugates and are involved in cell-cell recognition and cell-pathogen interactions. Catalyzes the conversion of CMP-N-acetylneuraminic acid (CMP-Neu5Ac) into its hydroxylated derivative CMP-N-glycolylneuraminic acid (CMP-Neu5Gc), a sialic acid abundantly expressed at the surface of many cells. This chain is Cytidine monophosphate-N-acetylneuraminic acid hydroxylase (CMAH), found in Pan paniscus (Pygmy chimpanzee).